A 397-amino-acid polypeptide reads, in one-letter code: NADH-quinone oxidoreductase subunit H (397 aa).

9 helical membrane-spanning segments follow: residues 7–27 (ALLITLLKAVLVALALLTAFA), 78–98 (LVYTLAPILAIGMALTAFGGI), 120–140 (ILALLALTSMGVYGIFLGGWA), 164–184 (MGLSVLGLLMLVGSTNFLDIV), 195–215 (WLILFQVFAFALFMVSSFAEV), 247–267 (MAEYVNIMTASALMSTLFFGG), 283–303 (SWPLVWLIAKIAFFMFLFIWV), 322–342 (LTLPLALVNTLVVAAVLAFVP), and 353–373 (WLLGAVSLLLLLILFAASDAV).

The protein belongs to the complex I subunit 1 family. In terms of assembly, NDH-1 is composed of 15 different subunits. Subunits NuoA, H, J, K, L, M, N constitute the membrane sector of the complex.

It localises to the cell membrane. It carries out the reaction a quinone + NADH + 5 H(+)(in) = a quinol + NAD(+) + 4 H(+)(out). Its function is as follows. NDH-1 shuttles electrons from NADH, via FMN and iron-sulfur (Fe-S) centers, to quinones in the respiratory chain. The immediate electron acceptor for the enzyme in this species is believed to be ubiquinone. Couples the redox reaction to proton translocation (for every two electrons transferred, four hydrogen ions are translocated across the cytoplasmic membrane), and thus conserves the redox energy in a proton gradient. This subunit may bind ubiquinone. This chain is NADH-quinone oxidoreductase subunit H, found in Deinococcus radiodurans (strain ATCC 13939 / DSM 20539 / JCM 16871 / CCUG 27074 / LMG 4051 / NBRC 15346 / NCIMB 9279 / VKM B-1422 / R1).